A 436-amino-acid polypeptide reads, in one-letter code: GTPase Der (436 aa).

2 consecutive EngA-type G domains span residues 3 to 168 and 177 to 352; these read PLIA…PESD and IRLA…QNRS. Residues 9 to 16, 56 to 60, 120 to 123, 183 to 190, 230 to 234, and 295 to 298 each bind GTP; these read GRPNVGKS, DTGGY, NKAE, DTAGL, and NKWD. Positions 353-436 constitute a KH-like domain; the sequence is RKISTSALNR…VTISLRFMQK (84 aa).

Belongs to the TRAFAC class TrmE-Era-EngA-EngB-Septin-like GTPase superfamily. EngA (Der) GTPase family. In terms of assembly, associates with the 50S ribosomal subunit.

Functionally, GTPase that plays an essential role in the late steps of ribosome biogenesis. In Chlorobium luteolum (strain DSM 273 / BCRC 81028 / 2530) (Pelodictyon luteolum), this protein is GTPase Der.